We begin with the raw amino-acid sequence, 63 residues long: Protein sigN172 (63 aa).

This Dictyostelium discoideum (Social amoeba) protein is Protein sigN172.